We begin with the raw amino-acid sequence, 783 residues long: Protein DWD HYPERSENSITIVE TO UV-B 1 (783 aa).

WD repeat units follow at residues 145–198 and 212–256; these read GEFT…LKLP and SDSS…DPSL. The short motif at 382–389 is the Nuclear localization signal element; the sequence is RKKESVVR. WD repeat units lie at residues 439 to 480, 485 to 525, 538 to 577, 581 to 621, 625 to 664, and 666 to 710; these read DNSR…IFRY, GSQS…STVT, DEFD…RLQV, MHQE…SRPC, SSTK…LHLN, and EIVP…RRLR.

Interacts directly with DDB1A. Binds to COP1 and RUP1.

It localises to the nucleus. Its function is as follows. May act as a substrate receptor of a CUL4-RING E3 ubiquitin-protein ligase (CRL4) complex involved in the negative regulation of cellular responses to ultraviolet-B (UV-B) illumination, likely in coordination with RUP1. Interacts with COP1 and probably prevents the formation of active UVR8-COP1 complex, thus avoiding UVR8-COP1-mediated positive regulation of UV-B responses. The sequence is that of Protein DWD HYPERSENSITIVE TO UV-B 1 from Arabidopsis thaliana (Mouse-ear cress).